Here is a 373-residue protein sequence, read N- to C-terminus: Flagellar P-ring protein (373 aa).

The first 30 residues, 1–30, serve as a signal peptide directing secretion; sequence MTNRWSFDVNKNLVTVLFTWLCLSISTAHA.

This sequence belongs to the FlgI family. In terms of assembly, the basal body constitutes a major portion of the flagellar organelle and consists of four rings (L,P,S, and M) mounted on a central rod.

The protein localises to the periplasm. It localises to the bacterial flagellum basal body. In terms of biological role, assembles around the rod to form the L-ring and probably protects the motor/basal body from shearing forces during rotation. The sequence is that of Flagellar P-ring protein from Aliivibrio fischeri (strain ATCC 700601 / ES114) (Vibrio fischeri).